A 292-amino-acid chain; its full sequence is Ribosomal protein L11 methyltransferase (292 aa).

The S-adenosyl-L-methionine site is built by Thr-144, Gly-165, Asp-187, and Asn-229.

The protein belongs to the methyltransferase superfamily. PrmA family.

Its subcellular location is the cytoplasm. The catalysed reaction is L-lysyl-[protein] + 3 S-adenosyl-L-methionine = N(6),N(6),N(6)-trimethyl-L-lysyl-[protein] + 3 S-adenosyl-L-homocysteine + 3 H(+). In terms of biological role, methylates ribosomal protein L11. This Ectopseudomonas mendocina (strain ymp) (Pseudomonas mendocina) protein is Ribosomal protein L11 methyltransferase.